A 380-amino-acid polypeptide reads, in one-letter code: Chaperone protein DnaJ (380 aa).

One can recognise a J domain in the interval 5 to 70 (DFYEVLGVSK…NLRARYDQYG (66 aa)). The segment at 135–213 (GVSKEIKVPS…CHGEGRYQKT (79 aa)) adopts a CR-type zinc-finger fold. 8 residues coordinate Zn(2+): Cys-148, Cys-151, Cys-165, Cys-168, Cys-187, Cys-190, Cys-201, and Cys-204. CXXCXGXG motif repeat units lie at residues 148–155 (CEVCNGSG), 165–172 (CPTCHGAG), 187–194 (CPHCHGRG), and 201–208 (CRKCHGEG).

Belongs to the DnaJ family. In terms of assembly, homodimer. Requires Zn(2+) as cofactor.

Its subcellular location is the cytoplasm. Functionally, participates actively in the response to hyperosmotic and heat shock by preventing the aggregation of stress-denatured proteins and by disaggregating proteins, also in an autonomous, DnaK-independent fashion. Unfolded proteins bind initially to DnaJ; upon interaction with the DnaJ-bound protein, DnaK hydrolyzes its bound ATP, resulting in the formation of a stable complex. GrpE releases ADP from DnaK; ATP binding to DnaK triggers the release of the substrate protein, thus completing the reaction cycle. Several rounds of ATP-dependent interactions between DnaJ, DnaK and GrpE are required for fully efficient folding. Also involved, together with DnaK and GrpE, in the DNA replication of plasmids through activation of initiation proteins. This Aeromonas salmonicida (strain A449) protein is Chaperone protein DnaJ.